The primary structure comprises 362 residues: Homeobox protein Nkx-2.3 (362 aa).

Disordered stretches follow at residues 126–149 and 203–222; these read EAAGDCKTSEDGERPKPRSRRKPR and QRQDKSLELGTHAPPPPPRR. Basic and acidic residues predominate over residues 132-141; it reads KTSEDGERPK. A DNA-binding region (homeobox) is located at residues 145–204; sequence RRKPRVLFSQAQVFELERRFKQQRYLSAPEREHLASSLKLTSTQVKIWFQNRRYKCKRQR.

Belongs to the NK-2 homeobox family. As to expression, expressed in spleen and intestine. Also expressed in salivary gland and tongue.

The protein resides in the nucleus. Its function is as follows. Transcriptional regulator essential for normal development and functions of the small intestine and spleen. Activates directly MADCAM1 expression. Required for homing of lymphocytes in spleen and mucosa-associated lymphoid tissue. May have a role during pharyngeal organogenesis. In Mus musculus (Mouse), this protein is Homeobox protein Nkx-2.3 (Nkx2-3).